A 236-amino-acid chain; its full sequence is LexA repressor (236 aa).

Residues 1–25 (MNDSNDTSVAGGAAGADSRVLSADS) are disordered. A DNA-binding region (H-T-H motif) is located at residues 51 to 71 (IREIGDAVGLTSTSSVAHQLR). Active-site for autocatalytic cleavage activity residues include S160 and K197.

This sequence belongs to the peptidase S24 family. In terms of assembly, homodimer.

It catalyses the reaction Hydrolysis of Ala-|-Gly bond in repressor LexA.. Represses a number of genes involved in the response to DNA damage (SOS response), including recA and lexA. In the presence of single-stranded DNA, RecA interacts with LexA causing an autocatalytic cleavage which disrupts the DNA-binding part of LexA, leading to derepression of the SOS regulon and eventually DNA repair. The polypeptide is LexA repressor (Mycobacterium tuberculosis (strain ATCC 25177 / H37Ra)).